The following is a 149-amino-acid chain: Histone H2B.3, sperm (149 aa).

A disordered region spans residues 1 to 57 (MPRSPAKTSPRKGSPRKGSPRKGSPSRKASPKRGGKGAKRAGKGGRRRRVVKRRRRR). 6 consecutive short sequence motifs (SPKK motif) follow at residues 4–7 (SPAK), 9–12 (SPRK), 14–17 (SPRK), 19–22 (SPRK), 24–27 (SPSR), and 30–33 (SPKR). Residues 9–20 (SPRKGSPRKGSP) are compositionally biased toward basic residues. 3 positions are modified to phosphoserine: Ser19, Ser24, and Ser30. Basic residues predominate over residues 29 to 57 (ASPKRGGKGAKRAGKGGRRRRVVKRRRRR). The O-linked (GlcNAc) serine glycan is linked to Ser136. Lys144 is covalently cross-linked (Glycyl lysine isopeptide (Lys-Gly) (interchain with G-Cter in ubiquitin)).

The protein belongs to the histone H2B family. As to quaternary structure, the nucleosome is a histone octamer containing two molecules each of H2A, H2B, H3 and H4 assembled in one H3-H4 heterotetramer and two H2A-H2B heterodimers. The octamer wraps approximately 147 bp of DNA. Monoubiquitination of Lys-144 gives a specific tag for epigenetic transcriptional activation and is also prerequisite for histone H3 'Lys-4' and 'Lys-79' methylation. In terms of processing, phosphorylated on SPKK motifs 4, 5 and 6; which may regulate DNA binding. Dephosphorylated during maturation of spermatids to mature sperm and rephosphorylated at fertilization. Post-translationally, glcNAcylation at Ser-136 promotes monoubiquitination of Lys-144. It fluctuates in response to extracellular glucose, and associates with transcribed genes.

The protein resides in the nucleus. Its subcellular location is the chromosome. Functionally, core component of nucleosome. Nucleosomes wrap and compact DNA into chromatin, limiting DNA accessibility to the cellular machineries which require DNA as a template. Histones thereby play a central role in transcription regulation, DNA repair, DNA replication and chromosomal stability. DNA accessibility is regulated via a complex set of post-translational modifications of histones, also called histone code, and nucleosome remodeling. In Parechinus angulosus (Angulate sea urchin), this protein is Histone H2B.3, sperm.